The chain runs to 201 residues: Potassium-transporting ATPase KdpC subunit (201 aa).

The helical transmembrane segment at 9 to 29 (ILVMLALTLITGLLYPLAMTV) threads the bilayer. Composition is skewed to polar residues over residues 73 to 84 (TTAADPNDSTKT) and 91 to 101 (AANSSGSNLGP). The disordered stretch occupies residues 73–103 (TTAADPNDSTKTVPAPYNAANSSGSNLGPTS).

This sequence belongs to the KdpC family. In terms of assembly, the system is composed of three essential subunits: KdpA, KdpB and KdpC.

It is found in the cell inner membrane. Functionally, part of the high-affinity ATP-driven potassium transport (or Kdp) system, which catalyzes the hydrolysis of ATP coupled with the electrogenic transport of potassium into the cytoplasm. This subunit acts as a catalytic chaperone that increases the ATP-binding affinity of the ATP-hydrolyzing subunit KdpB by the formation of a transient KdpB/KdpC/ATP ternary complex. The sequence is that of Potassium-transporting ATPase KdpC subunit from Bradyrhizobium sp. (strain BTAi1 / ATCC BAA-1182).